We begin with the raw amino-acid sequence, 266 residues long: Type 1 encapsulin shell protein (266 aa).

It belongs to the encapsulin family. Family 1 subfamily. In terms of assembly, homomultimeric. This encapsulin nanocompartment is formed by 60 subunits, and encloses one Dyp homohexamer; partially assembled 58-subunit compartments with and without cargo are also purified. May assemble the shell from dimers. Monomers form pentamers, which assemble to form hollow shells with pores 5-8 Angstroms in diameter where 3 pentamers meet.

It localises to the encapsulin nanocompartment. Functionally, shell component of a type 1 encapsulin nanocompartment. Assembles into proteinaceous shells 23-24 nm in diameter with 2-2.5 nm thick walls. Endogenous cargo protein DyP (dye-decolorizing peroxidase) is targeted to the interior via its C-terminal extension; only 1 DyP hexamer is incorporated into each shell. Empty shells can be isolated in the absence of cargo. Cargo encapsulation probably precedes assembly of the nanocompartment; may assemble or disassemble via dimers, subcomplexes with a distinct preference for even numbers of subunits are detected. Nanocompartments are stable against mechanical forces; loaded nanocompartments are less stable than empty ones. Nanocompartments are stable between pH 5-10; they aggregate at pH 9-10 and start to disassemble at pH 11. They are stable in 1M NaCl, 1 M MgCl(2) and 1M CaCl(2), unstable in 20% DMSO (dimethylsulfoxide) and are stable in 20% but not 40% ethanol. In Brevibacterium linens, this protein is Type 1 encapsulin shell protein.